A 305-amino-acid polypeptide reads, in one-letter code: MQHPREENSIVVELEPSLATFIKQGFNNLVKWPLLNIGIVLSNTSTAVNEEWLTAVEHIPTMKIFYKHIHKILTREMGFLVYLKRSQSERDNYITLYDFDYYIIDKDTNSVTMVDKPTELKETLLHVFQEYRLKSSQTIELIAFSSGTVINEDIVSKLTFLDVEVFNREYNNVKTIIDPDFVFRSPFIVISPMGKLTFFVEVYSWFDFKSCLKDIIDFLEGALIANIHNHMIKVGNCDETVSSYNPESGMLFVNDLMTMNIVNFFGCNSRLESYHRFDMTKVDVELFIKALSDACKKILSASNRL.

It belongs to the poxviridae DNA-directed RNA polymerase 35 kDa subunit family. In terms of assembly, the DNA-dependent RNA polymerase used for intermediate and late genes expression consists of eight subunits 147 kDa, 133 kDa, 35 kDa, 30 kDa, 22 kDa, 19 kDa, 18 kDa and 7 kDa totalling more than 500 kDa in mass. The same holoenzyme, with the addition of the transcription-specificity factor RAP94, is used for early gene expression.

It localises to the virion. It catalyses the reaction RNA(n) + a ribonucleoside 5'-triphosphate = RNA(n+1) + diphosphate. Functionally, part of the DNA-dependent RNA polymerase which catalyzes the transcription of viral DNA into RNA using the four ribonucleoside triphosphates as substrates. Responsible for the transcription of early, intermediate and late genes. DNA-dependent RNA polymerase associates with the early transcription factor (ETF), itself composed of D6 and A7, thereby allowing the early genes transcription. Late transcription, and probably also intermediate transcription, require newly synthesized RNA polymerase. This Bos taurus (Bovine) protein is DNA-directed RNA polymerase 35 kDa subunit (OPG156).